Consider the following 1551-residue polypeptide: Pentafunctional AROM polypeptide (1551 aa).

The 3-dehydroquinate synthase stretch occupies residues 1-379; that stretch reads MSIEKVPILG…YQLKAHQVSK (379 aa). Residues 42–44, 80–83, 111–113, and aspartate 116 contribute to the NAD(+) site; these read DTN, ENNK, and GGV. Residue arginine 127 participates in 7-phospho-2-dehydro-3-deoxy-D-arabino-heptonate binding. Residue 136–137 coordinates NAD(+); that stretch reads TT. The 7-phospho-2-dehydro-3-deoxy-D-arabino-heptonate site is built by aspartate 143 and lysine 149. Residue lysine 158 participates in NAD(+) binding. 7-phospho-2-dehydro-3-deoxy-D-arabino-heptonate is bound at residue asparagine 159. Residues 176-179 and asparagine 187 contribute to the NAD(+) site; that span reads FLET. Glutamate 191 is a Zn(2+) binding site. 7-phospho-2-dehydro-3-deoxy-D-arabino-heptonate-binding positions include 191 to 194 and lysine 243; that span reads EVVK. Glutamate 253 serves as the catalytic Proton acceptor; for 3-dehydroquinate synthase activity. 7-phospho-2-dehydro-3-deoxy-D-arabino-heptonate is bound by residues 257 to 261 and histidine 264; that span reads RNLLN. Histidine 264 is a Zn(2+) binding site. Histidine 268 (proton acceptor; for 3-dehydroquinate synthase activity) is an active-site residue. 7-phospho-2-dehydro-3-deoxy-D-arabino-heptonate-binding residues include histidine 280 and lysine 351. Histidine 280 provides a ligand contact to Zn(2+). Positions 392–838 are EPSP synthase; the sequence is VHPFTNPPKE…WDILHSKFKI (447 aa). Residues 858 to 1048 are shikimate kinase; sequence DKSIIVIGMR…VPAGRSAAVV (191 aa). 865–872 lines the ATP pocket; the sequence is GMRGTGKS. The tract at residues 1049–1258 is 3-dehydroquinase; that stretch reads LTSPDLNEVV…NDEEFLTIGE (210 aa). The active-site Schiff-base intermediate with substrate; for 3-dehydroquinate dehydratase activity is the arginine 1194. The interval 1271-1551 is shikimate dehydrogenase; the sequence is AKKFWVIGSP…EIIHRAVVEE (281 aa).

This sequence in the N-terminal section; belongs to the sugar phosphate cyclases superfamily. Dehydroquinate synthase family. It in the 2nd section; belongs to the EPSP synthase family. The protein in the 3rd section; belongs to the shikimate kinase family. In the 4th section; belongs to the type-I 3-dehydroquinase family. This sequence in the C-terminal section; belongs to the shikimate dehydrogenase family. As to quaternary structure, homodimer. Zn(2+) is required as a cofactor.

It localises to the cytoplasm. It carries out the reaction 7-phospho-2-dehydro-3-deoxy-D-arabino-heptonate = 3-dehydroquinate + phosphate. The catalysed reaction is 3-dehydroquinate = 3-dehydroshikimate + H2O. It catalyses the reaction shikimate + NADP(+) = 3-dehydroshikimate + NADPH + H(+). The enzyme catalyses shikimate + ATP = 3-phosphoshikimate + ADP + H(+). It carries out the reaction 3-phosphoshikimate + phosphoenolpyruvate = 5-O-(1-carboxyvinyl)-3-phosphoshikimate + phosphate. Its pathway is metabolic intermediate biosynthesis; chorismate biosynthesis; chorismate from D-erythrose 4-phosphate and phosphoenolpyruvate: step 2/7. It functions in the pathway metabolic intermediate biosynthesis; chorismate biosynthesis; chorismate from D-erythrose 4-phosphate and phosphoenolpyruvate: step 3/7. It participates in metabolic intermediate biosynthesis; chorismate biosynthesis; chorismate from D-erythrose 4-phosphate and phosphoenolpyruvate: step 4/7. The protein operates within metabolic intermediate biosynthesis; chorismate biosynthesis; chorismate from D-erythrose 4-phosphate and phosphoenolpyruvate: step 5/7. Its pathway is metabolic intermediate biosynthesis; chorismate biosynthesis; chorismate from D-erythrose 4-phosphate and phosphoenolpyruvate: step 6/7. Functionally, the AROM polypeptide catalyzes 5 consecutive enzymatic reactions in prechorismate polyaromatic amino acid biosynthesis. This is Pentafunctional AROM polypeptide from Candida albicans (strain SC5314 / ATCC MYA-2876) (Yeast).